The following is a 369-amino-acid chain: Probable serine/threonine-protein kinase FMP48 (369 aa).

The region spanning 2 to 369 is the Protein kinase domain; it reads YTKLRSIQSG…EKPCLIQDGK (368 aa). ATP-binding positions include 8–16 and K31; that span reads IQSGTFSTV. D133 acts as the Proton acceptor in catalysis.

Belongs to the protein kinase superfamily. Ser/Thr protein kinase family.

It localises to the mitochondrion. The enzyme catalyses L-seryl-[protein] + ATP = O-phospho-L-seryl-[protein] + ADP + H(+). The catalysed reaction is L-threonyl-[protein] + ATP = O-phospho-L-threonyl-[protein] + ADP + H(+). In Saccharomyces cerevisiae (strain ATCC 204508 / S288c) (Baker's yeast), this protein is Probable serine/threonine-protein kinase FMP48 (FMP48).